Consider the following 139-residue polypeptide: uncharacterized protein (139 aa).

Positions 3 to 110 constitute an HIT domain; sequence IFCNIVEGRD…VPTWSQDPDI (108 aa). Residues 95-99 carry the Histidine triad motif motif; it reads HSHFH.

This is an uncharacterized protein from Saccharolobus solfataricus (strain ATCC 35092 / DSM 1617 / JCM 11322 / P2) (Sulfolobus solfataricus).